Here is a 155-residue protein sequence, read N- to C-terminus: MSRRGTAEEKTAKSDPIYRNRLVNMLVNRILKHGKKSLAYQIIYRAVKKIQQKTETNPLSVLRQAIRGVTPDIAVKARRVGGSTHQVPIEIGSTQGKALAIRWLLAASRKRPGRNMAFKLSSELVDAAKGSGDAIRKKEETHRMAEANRAFAHFR.

This sequence belongs to the universal ribosomal protein uS7 family. As to quaternary structure, part of the 30S ribosomal subunit.

It is found in the plastid. The protein resides in the chloroplast. In terms of biological role, one of the primary rRNA binding proteins, it binds directly to 16S rRNA where it nucleates assembly of the head domain of the 30S subunit. The chain is Small ribosomal subunit protein uS7cz/uS7cy (rps7-A) from Daucus carota (Wild carrot).